A 140-amino-acid chain; its full sequence is uncharacterized protein (140 aa).

A glycan (N-linked (GlcNAc...) asparagine) is linked at Asn27. A run of 3 helical transmembrane segments spans residues 45-65, 76-96, and 116-136; these read FSLY…GVYA, VWIF…TGTV, and VPLC…YSMV.

Belongs to the TMEM170 family.

The protein resides in the membrane. This is an uncharacterized protein from Saccharomyces cerevisiae (strain ATCC 204508 / S288c) (Baker's yeast).